The sequence spans 963 residues: SH3 domain-binding protein 4 (963 aa).

In terms of domain architecture, SH3 1 spans G55 to Y114. Residues S131, S246, S251, S279, and S296 each carry the phosphoserine modification. The 138-residue stretch at T317 to V454 folds into the ZU5 domain. A Phosphoserine modification is found at S637. The SH3 2 domain maps to S654–R724.

In terms of assembly, homodimer or homooligomer. Interacts with DNM2, EPS15, clathrin, the adapter protein complex 2/AP-2 and TFRC. Interacts with the Rag GTPases RRAGA, RRAGB, RRAGC and RRAGD; the interaction is most probably direct, preferentially occurs with their inactive GDP-bound form and is negatively regulated by amino acids. As to quaternary structure, (Microbial infection) Interacts with molluscum contagiosum virus protein MC159L; this interaction is important for the suppression of autophagy. Phosphorylated upon EGF stimulation. Phosphorylation prevents interaction with DNM2. Expressed in all tissues tested with higher expression in pancreas. Expressed by retinal pigment epithelial cells (at protein level).

It localises to the membrane. It is found in the clathrin-coated pit. The protein localises to the cytoplasmic vesicle. The protein resides in the clathrin-coated vesicle. Its subcellular location is the nucleus. May function in transferrin receptor internalization at the plasma membrane through a cargo-specific control of clathrin-mediated endocytosis. Alternatively, may act as a negative regulator of the amino acid-induced TOR signaling by inhibiting the formation of active Rag GTPase complexes. Preferentially binds inactive Rag GTPase complexes and prevents their interaction with the mTORC1 complex inhibiting its relocalization to lysosomes and its activation. Thereby, may indirectly regulate cell growth, proliferation and autophagy. The chain is SH3 domain-binding protein 4 (SH3BP4) from Homo sapiens (Human).